A 104-amino-acid chain; its full sequence is MTNRLVLSGTVCRTPLRKVSPSGIPHCQFVLEHRSVQEEAGFHRQAWCQMPVIISGHENQAITHSITVGSAVTVQGFISCHKAKNGLSKMVLHAEQIDLIDSGD.

The 101-residue stretch at 1 to 101 (MTNRLVLSGT…LHAEQIDLID (101 aa)) folds into the SSB domain.

The protein belongs to the PriB family. In terms of assembly, homodimer. Interacts with PriA and DnaT. Component of the replication restart primosome. Primosome assembly occurs via a 'hand-off' mechanism. PriA binds to replication forks, subsequently PriB then DnaT bind; DnaT then displaces ssDNA to generate the helicase loading substrate.

Involved in the restart of stalled replication forks, which reloads the replicative helicase on sites other than the origin of replication; the PriA-PriB pathway is the major replication restart pathway. During primosome assembly it facilitates complex formation between PriA and DnaT on DNA; stabilizes PriA on DNA. Stimulates the DNA unwinding activity of PriA helicase. In Enterobacter sp. (strain 638), this protein is Replication restart protein PriB.